A 233-amino-acid chain; its full sequence is 2,3,4,5-tetrahydropyridine-2,6-dicarboxylate N-acetyltransferase (233 aa).

It belongs to the transferase hexapeptide repeat family. DapH subfamily.

It catalyses the reaction (S)-2,3,4,5-tetrahydrodipicolinate + acetyl-CoA + H2O = L-2-acetamido-6-oxoheptanedioate + CoA. It functions in the pathway amino-acid biosynthesis; L-lysine biosynthesis via DAP pathway; LL-2,6-diaminopimelate from (S)-tetrahydrodipicolinate (acetylase route): step 1/3. Catalyzes the transfer of an acetyl group from acetyl-CoA to tetrahydrodipicolinate. In Oenococcus oeni (strain ATCC BAA-331 / PSU-1), this protein is 2,3,4,5-tetrahydropyridine-2,6-dicarboxylate N-acetyltransferase.